A 140-amino-acid polypeptide reads, in one-letter code: Nucleoside diphosphate kinase (140 aa).

The ATP site is built by Lys-11, Phe-59, Arg-87, Thr-93, Arg-104, and Asn-114. The active-site Pros-phosphohistidine intermediate is the His-117.

This sequence belongs to the NDK family. Mg(2+) is required as a cofactor.

It localises to the cytoplasm. It carries out the reaction a 2'-deoxyribonucleoside 5'-diphosphate + ATP = a 2'-deoxyribonucleoside 5'-triphosphate + ADP. The enzyme catalyses a ribonucleoside 5'-diphosphate + ATP = a ribonucleoside 5'-triphosphate + ADP. Functionally, major role in the synthesis of nucleoside triphosphates other than ATP. The ATP gamma phosphate is transferred to the NDP beta phosphate via a ping-pong mechanism, using a phosphorylated active-site intermediate. This chain is Nucleoside diphosphate kinase, found in Metallosphaera sedula (strain ATCC 51363 / DSM 5348 / JCM 9185 / NBRC 15509 / TH2).